Consider the following 661-residue polypeptide: Centrosomal protein of 76 kDa (661 aa).

Belongs to the CEP76 family.

It is found in the cytoplasm. It localises to the cytoskeleton. The protein localises to the microtubule organizing center. The protein resides in the centrosome. Its subcellular location is the centriole. Its function is as follows. Centrosomal protein involved in regulation of centriole duplication. Required to limit centriole duplication to once per cell cycle by preventing centriole reduplication. This chain is Centrosomal protein of 76 kDa (cep76), found in Xenopus tropicalis (Western clawed frog).